The sequence spans 459 residues: Asperlicin C monooxygenase (459 aa).

Positions 49, 62, and 121 each coordinate FAD. Residue Arg199 is part of the active site. FAD contacts are provided by Asp323 and Ala336.

This sequence belongs to the paxM FAD-dependent monooxygenase family. FAD is required as a cofactor.

The enzyme catalyses asperlicin C + NADPH + O2 + H(+) = asperlicin E + NADP(+) + H2O. It carries out the reaction asperlicin C + NADH + O2 + H(+) = asperlicin E + NAD(+) + H2O. Catalyzes the conversion of asperlicin A to form asperlicin E, a potent cholecystokinin receptor CCK(A) antagonist. In Petromyces alliaceus (Aspergillus alliaceus), this protein is Asperlicin C monooxygenase.